Reading from the N-terminus, the 284-residue chain is Nucleotide-binding protein SPO0713 (284 aa).

An ATP-binding site is contributed by 3–10 (GPSGAGRS). 50–53 (DARN) contacts GTP.

This sequence belongs to the RapZ-like family.

In terms of biological role, displays ATPase and GTPase activities. The sequence is that of Nucleotide-binding protein SPO0713 from Ruegeria pomeroyi (strain ATCC 700808 / DSM 15171 / DSS-3) (Silicibacter pomeroyi).